A 444-amino-acid chain; its full sequence is Serine carboxypeptidase 2 (444 aa).

60–62 (NGG) lines the substrate pocket. 3 disulfide bridges follow: Cys65-Cys324, Cys222-Cys234, and Cys258-Cys291. Asn116 and Asn127 each carry an N-linked (GlcNAc...) asparagine glycan. Substrate is bound at residue 157-159 (ESY). Ser158 is a catalytic residue. Asn259 carries an N-linked (GlcNAc...) asparagine glycan. A propeptide spans 260-286 (ITSSSSSSSSSLSQQRRSRGRYPWLTG) (linker peptide). Residues Asn312 and Asn318 are each glycosylated (N-linked (GlcNAc...) asparagine). Residues Asp361 and His413 contribute to the active site. Substrate is bound at residue 409–413 (RGAGH).

Belongs to the peptidase S10 family. In terms of assembly, carboxypeptidase II is a dimer, where each monomer is composed of two chains linked by a disulfide bond. Post-translationally, N-glycosylated.

It carries out the reaction Preferential release of a C-terminal arginine or lysine residue.. This Triticum aestivum (Wheat) protein is Serine carboxypeptidase 2 (CBP2).